A 237-amino-acid chain; its full sequence is Sugar fermentation stimulation protein homolog (237 aa).

Belongs to the SfsA family.

In Pseudomonas fluorescens (strain ATCC BAA-477 / NRRL B-23932 / Pf-5), this protein is Sugar fermentation stimulation protein homolog.